The chain runs to 199 residues: UPF0301 protein Anae109_0457 (199 aa).

The protein belongs to the UPF0301 (AlgH) family.

The polypeptide is UPF0301 protein Anae109_0457 (Anaeromyxobacter sp. (strain Fw109-5)).